Here is a 284-residue protein sequence, read N- to C-terminus: Shikimate dehydrogenase (NADP(+)) (284 aa).

Shikimate-binding positions include 23-25 (SLS) and threonine 70. Catalysis depends on lysine 74, which acts as the Proton acceptor. Glutamate 86 provides a ligand contact to NADP(+). Positions 95 and 111 each coordinate shikimate. Residues 135 to 139 (GAGGA), 159 to 164 (NRTPGR), and alanine 227 contribute to the NADP(+) site. Shikimate is bound at residue tyrosine 229. An NADP(+)-binding site is contributed by glycine 251.

This sequence belongs to the shikimate dehydrogenase family. Homodimer.

The catalysed reaction is shikimate + NADP(+) = 3-dehydroshikimate + NADPH + H(+). Its pathway is metabolic intermediate biosynthesis; chorismate biosynthesis; chorismate from D-erythrose 4-phosphate and phosphoenolpyruvate: step 4/7. Involved in the biosynthesis of the chorismate, which leads to the biosynthesis of aromatic amino acids. Catalyzes the reversible NADPH linked reduction of 3-dehydroshikimate (DHSA) to yield shikimate (SA). This Rubrobacter xylanophilus (strain DSM 9941 / JCM 11954 / NBRC 16129 / PRD-1) protein is Shikimate dehydrogenase (NADP(+)).